The chain runs to 199 residues: Putative AgrB-like protein (199 aa).

5 helical membrane passes run 43–63 (IIIF…FSFI), 81–101 (YGCL…TRLF), 108–128 (FYIV…PCPN), 139–159 (LKIL…LSPL), and 165–185 (ILIS…KGVI).

It belongs to the AgrB family.

Its subcellular location is the cell membrane. Its function is as follows. May be involved in the proteolytic processing of a quorum sensing system signal molecule precursor. The chain is Putative AgrB-like protein (cfg02) from Clostridium beijerinckii (Clostridium MP).